The primary structure comprises 205 residues: Ypt/Rab-type GTPase ypt7 (205 aa).

GTP contacts are provided by residues 17–23, 33–40, G66, 125–128, and 157–159; these read SGVGKTS, FSASYKAT, NKID, and SAK. The short motif at 37-45 is the Effector region element; it reads YKATIGADF. S-geranylgeranyl cysteine attachment occurs at residues C203 and C205. C205 is modified (cysteine methyl ester).

This sequence belongs to the small GTPase superfamily. Rab family. Interacts with the Rab GDP dissociation inhibitor GDI1.

The protein localises to the vacuole. Rab activation is generally mediated by a guanine exchange factor (GEF), while inactivation through hydrolysis of bound GTP is catalyzed by a GTPase activating protein (GAP). Functionally, ypt/Rab-type GTPases are key regulators of membrane trafficking and intracellular vesicular transport. They act as molecular switches that convert between GTP-bound and GDP-bound states, and regulate virtually all steps of membrane traffic from the formation of the transport vesicle at the donor membrane to its fusion at the target membrane. In the GDP-bound state, Ypt proteins are predominantly cytosolic, solubilized through the interaction with a GDP dissociation inhibitor (GDI). In the GTP-bound state, the proteins are membrane bound and interact with specific effector proteins that select cargo, promote vesicle movement, or verify the correct site of fusion. Required for fungal morphogenesis, vacuole fusion, autophagy, stress resistance and pathogenicity. The polypeptide is Ypt/Rab-type GTPase ypt7 (Pyricularia oryzae (strain 70-15 / ATCC MYA-4617 / FGSC 8958) (Rice blast fungus)).